Here is a 334-residue protein sequence, read N- to C-terminus: Adenosine deaminase (334 aa).

His12 and His14 together coordinate Zn(2+). 3 residues coordinate substrate: His14, Asp16, and Gly170. His197 provides a ligand contact to Zn(2+). The active-site Proton donor is Glu200. Asp278 is a binding site for Zn(2+). A substrate-binding site is contributed by Asp279.

The protein belongs to the metallo-dependent hydrolases superfamily. Adenosine and AMP deaminases family. Adenosine deaminase subfamily. Zn(2+) serves as cofactor.

It carries out the reaction adenosine + H2O + H(+) = inosine + NH4(+). The catalysed reaction is 2'-deoxyadenosine + H2O + H(+) = 2'-deoxyinosine + NH4(+). In terms of biological role, catalyzes the hydrolytic deamination of adenosine and 2-deoxyadenosine. The chain is Adenosine deaminase from Yersinia pseudotuberculosis serotype IB (strain PB1/+).